A 470-amino-acid polypeptide reads, in one-letter code: MNRQIANILENYLGRYPSLNEYHTLKSQYRNIQKVNIFNKDIFISLLRKNKKKFFSDLVCTQSDIKHSVLSYFSKQENTYSIGKLYTIIELQTILVTTYTDVLGVLTTKGPDIFSSTIYYNISSIKKLATDIVHAMMITTVSDKIMGRHNVSSLVGNVNTLMEEYLRRHNKNCICYGSYSLHLLNPDVRYGDIDILQTNSRTFLIDLAFLIKFITGYNVVLLKVPYLKNYMVLKDHNDNHIIDSFNIRQDTMETIPKILIDNIYIVDPVLQLMSMLKMFSQIDRLEDIVKNPDKVIIRLATLLEYVRINYGIILNGDHGNMPMLSTFNHDQRIITVQTNMYNFPFKKCFIYLDENTLSRDILHLNADDAVDFENVSNSAYLIHNDTMYTYFSNTILLRSENEIHEISTRAISAHILLYQILTKGDIIQPLSDIINSLISIEKCTIYKVIQRDKKTGKHGIIDIEKDIITH.

Active-site residues include Asp-192 and Asp-194.

This sequence belongs to the poxviridae poly(A) polymerase catalytic subunit family. Heterodimer of a large (catalytic) subunit and a small (regulatory) subunit.

The catalysed reaction is RNA(n) + ATP = RNA(n)-3'-adenine ribonucleotide + diphosphate. In terms of biological role, polymerase that creates the 3'-poly(A) tail of mRNA's. The chain is Poly(A) polymerase catalytic subunit (PAPL) from Sus scrofa (Pig).